Consider the following 304-residue polypeptide: Cell division protein ZipA (304 aa).

The Periplasmic segment spans residues 1–5 (MQDLR). Residues 6–26 (LILIVVGAIAIIALLLHGLWT) form a helical membrane-spanning segment. Over 27–304 (SRKERSSVFR…IRDVIDANSH (278 aa)) the chain is Cytoplasmic. The tract at residues 31–165 (RSSVFRDRPH…PEPQSQPKQK (135 aa)) is disordered. Residues 121-132 (ARPETHKPDQPE) show a composition bias toward basic and acidic residues. Over residues 137–158 (AAPAAAETAPAPAEPAQKTPEP) the composition is skewed to low complexity.

The protein belongs to the ZipA family. In terms of assembly, interacts with FtsZ via their C-terminal domains.

It localises to the cell inner membrane. In terms of biological role, essential cell division protein that stabilizes the FtsZ protofilaments by cross-linking them and that serves as a cytoplasmic membrane anchor for the Z ring. Also required for the recruitment to the septal ring of downstream cell division proteins. The chain is Cell division protein ZipA from Erwinia tasmaniensis (strain DSM 17950 / CFBP 7177 / CIP 109463 / NCPPB 4357 / Et1/99).